Consider the following 127-residue polypeptide: Small ribosomal subunit protein bS6 (127 aa).

Belongs to the bacterial ribosomal protein bS6 family.

Binds together with bS18 to 16S ribosomal RNA. This is Small ribosomal subunit protein bS6 from Acinetobacter baumannii (strain AB0057).